A 293-amino-acid chain; its full sequence is Formamidopyrimidine-DNA glycosylase (293 aa).

The active-site Schiff-base intermediate with DNA is the Pro2. Glu3 serves as the catalytic Proton donor. Residue Lys58 is the Proton donor; for beta-elimination activity of the active site. DNA-binding residues include His104, Arg123, and Arg166. An FPG-type zinc finger spans residues 257-293; the sequence is QVYDREGDKCRTPACKGAVKRFTQNGRSTFWCPVCQT. The active-site Proton donor; for delta-elimination activity is Arg283.

The protein belongs to the FPG family. Monomer. Zn(2+) is required as a cofactor.

The catalysed reaction is Hydrolysis of DNA containing ring-opened 7-methylguanine residues, releasing 2,6-diamino-4-hydroxy-5-(N-methyl)formamidopyrimidine.. It catalyses the reaction 2'-deoxyribonucleotide-(2'-deoxyribose 5'-phosphate)-2'-deoxyribonucleotide-DNA = a 3'-end 2'-deoxyribonucleotide-(2,3-dehydro-2,3-deoxyribose 5'-phosphate)-DNA + a 5'-end 5'-phospho-2'-deoxyribonucleoside-DNA + H(+). Involved in base excision repair of DNA damaged by oxidation or by mutagenic agents. Acts as a DNA glycosylase that recognizes and removes damaged bases. Has a preference for oxidized purines, such as 7,8-dihydro-8-oxoguanine (8-oxoG). Has AP (apurinic/apyrimidinic) lyase activity and introduces nicks in the DNA strand. Cleaves the DNA backbone by beta-delta elimination to generate a single-strand break at the site of the removed base with both 3'- and 5'-phosphates. This is Formamidopyrimidine-DNA glycosylase from Nitrobacter winogradskyi (strain ATCC 25391 / DSM 10237 / CIP 104748 / NCIMB 11846 / Nb-255).